Here is a 71-residue protein sequence, read N- to C-terminus: Biotinylated protein TB7.3 homolog (71 aa).

One can recognise a Biotinyl-binding domain in the interval 2–71 (AEDVRAEIVA…QAGHLIAVID (70 aa)). The residue at position 37 (lysine 37) is an N6-biotinyllysine.

The chain is Biotinylated protein TB7.3 homolog from Mycolicibacterium smegmatis (strain ATCC 700084 / mc(2)155) (Mycobacterium smegmatis).